We begin with the raw amino-acid sequence, 252 residues long: 3-deoxy-manno-octulosonate cytidylyltransferase 2 (252 aa).

Belongs to the KdsB family.

Its subcellular location is the cytoplasm. It catalyses the reaction 3-deoxy-alpha-D-manno-oct-2-ulosonate + CTP = CMP-3-deoxy-beta-D-manno-octulosonate + diphosphate. It participates in nucleotide-sugar biosynthesis; CMP-3-deoxy-D-manno-octulosonate biosynthesis; CMP-3-deoxy-D-manno-octulosonate from 3-deoxy-D-manno-octulosonate and CTP: step 1/1. The protein operates within bacterial outer membrane biogenesis; lipopolysaccharide biosynthesis. Its function is as follows. Activates KDO (a required 8-carbon sugar) for incorporation into bacterial lipopolysaccharide in Gram-negative bacteria. The protein is 3-deoxy-manno-octulosonate cytidylyltransferase 2 of Actinobacillus pleuropneumoniae serotype 5b (strain L20).